We begin with the raw amino-acid sequence, 471 residues long: tRNA modification GTPase MnmE (471 aa).

(6S)-5-formyl-5,6,7,8-tetrahydrofolate-binding residues include Arg-26, Glu-83, and Lys-136. Positions 232–393 (GLRVVLAGQP…LRRRLLQLAG (162 aa)) constitute a TrmE-type G domain. Position 242 (Asn-242) interacts with K(+). GTP-binding positions include 242–247 (NVGKSS), 261–267 (TPIAGTT), 286–289 (DTAG), 354–357 (NKAD), and 374–376 (SAR). Ser-246 lines the Mg(2+) pocket. Thr-261, Ile-263, and Thr-266 together coordinate K(+). Residue Thr-267 participates in Mg(2+) binding. Residue Lys-471 participates in (6S)-5-formyl-5,6,7,8-tetrahydrofolate binding.

The protein belongs to the TRAFAC class TrmE-Era-EngA-EngB-Septin-like GTPase superfamily. TrmE GTPase family. As to quaternary structure, homodimer. Heterotetramer of two MnmE and two MnmG subunits. Requires K(+) as cofactor.

It localises to the cytoplasm. In terms of biological role, exhibits a very high intrinsic GTPase hydrolysis rate. Involved in the addition of a carboxymethylaminomethyl (cmnm) group at the wobble position (U34) of certain tRNAs, forming tRNA-cmnm(5)s(2)U34. The protein is tRNA modification GTPase MnmE of Methylibium petroleiphilum (strain ATCC BAA-1232 / LMG 22953 / PM1).